The chain runs to 367 residues: 2-aminoethylphosphonate--pyruvate transaminase (367 aa).

Lys-194 carries the N6-(pyridoxal phosphate)lysine modification.

Belongs to the class-V pyridoxal-phosphate-dependent aminotransferase family. PhnW subfamily. Homodimer. Requires pyridoxal 5'-phosphate as cofactor.

It carries out the reaction (2-aminoethyl)phosphonate + pyruvate = phosphonoacetaldehyde + L-alanine. Involved in phosphonate degradation. The chain is 2-aminoethylphosphonate--pyruvate transaminase from Salmonella choleraesuis (strain SC-B67).